The primary structure comprises 735 residues: MGESPASVVLNASGGLFSLKMETLESELTCPICLELFEDPLLLPCAHSLCFSCAHRILVSSCSSGESIEPITAFQCPTCRYVISLNHRGLDGLKRNVTLQNIIDRFQKASVSGPNSPSESRRERTYRPTTAMSSERIACQFCEQDPPRDAVKTCITCEVSYCDRCLRATHPNKKPFTSHRLVEPVPDTHLRGITCLDHENEKVNMYCVSDDQLICALCKLVGRHRDHQVASLNDRFEKLKQTLEMNLTNLVKRNSELENQMAKLIQICQQVEVNTAMHEAKLMEECDELVEIIQQRKQMIAVKIKETKVMKLRKLAQQVANCRQCLERSTVLINQAEHILKENDQARFLQSAKNIAERVAMATASSQVLIPDINFNDAFENFALDFSREKKLLEGLDYLTAPNPPSIREELCTASHDTITVHWISDDEFSISSYELQYTIFTGQANFISKSWCSWGLWPEIRKCKEAVSCSRLAGAPRGLYNSVDSWMIVPNIKQNHYTVHGLQSGTRYIFIVKAINQAGSRNSEPTRLKTNSQPFKLDPKMTHKKLKISNDGLQMEKDESSLKKSHTPERFSGTGCYGAAGNIFIDSGCHYWEVVMGSSTWYAIGIAYKSAPKNEWIGKNASSWVFSRCNSNFVVRHNNKEMLVDVPPHLKRLGVLLDYDNNMLSFYDPANSLHLHTFDVTFILPVCPTFTIWNKSLMILSGLPAPDFIDYPERQECNCRPQESPYVSGMKTCH.

The RING-type zinc-finger motif lies at 30–80 (CPICLELFEDPLLLPCAHSLCFSCAHRILVSSCSSGESIEPITAFQCPTCR). The B box-type 1; degenerate zinc finger occupies 137 to 184 (IACQFCEQDPPRDAVKTCITCEVSYCDRCLRATHPNKKPFTSHRLVEP). A B box-type 2 zinc finger spans residues 190–232 (LRGITCLDHENEKVNMYCVSDDQLICALCKLVGRHRDHQVASL). Positions 195, 198, 218, and 224 each coordinate Zn(2+). The stretch at 233–301 (NDRFEKLKQT…IIQQRKQMIA (69 aa)) forms a coiled coil. A COS domain is found at 340–399 (LKENDQARFLQSAKNIAERVAMATASSQVLIPDINFNDAFENFALDFSREKKLLEGLDYL). The Fibronectin type-III domain occupies 398–531 (YLTAPNPPSI…RNSEPTRLKT (134 aa)). A B30.2/SPRY domain is found at 516-709 (INQAGSRNSE…ILSGLPAPDF (194 aa)).

The protein belongs to the TRIM/RBCC family. As to quaternary structure, homodimer or heterodimer with MID1. Interacts with IGBP1. Phosphorylated on serine and threonine residues. In terms of tissue distribution, low level in fetal kidney and lung, and in adult prostate, ovary and small intestine.

It localises to the cytoplasm. It is found in the cytoskeleton. The catalysed reaction is S-ubiquitinyl-[E2 ubiquitin-conjugating enzyme]-L-cysteine + [acceptor protein]-L-lysine = [E2 ubiquitin-conjugating enzyme]-L-cysteine + N(6)-ubiquitinyl-[acceptor protein]-L-lysine.. Its pathway is protein modification; protein ubiquitination. E3 ubiquitin ligase that plays a role in microtubule stabilization. Mediates the 'Lys-48'-linked polyubiquitination of LRRK2 to drive its localization to microtubules and its proteasomal degradation in neurons. This ubiquitination inhibits LRRK2 kinase activation by RAB29. The protein is Probable E3 ubiquitin-protein ligase MID2 (MID2) of Homo sapiens (Human).